A 611-amino-acid chain; its full sequence is Oxidoreductase cicC (611 aa).

Positions 1-20 (MALRYLNKFSLLSLAVPTLA) are cleaved as a signal peptide. FAD is bound by residues 45–46 (NA) and 65–66 (EA). N-linked (GlcNAc...) asparagine glycans are attached at residues asparagine 76 and asparagine 113. FAD contacts are provided by residues valine 123 and 131 to 134 (NLMT). N-linked (GlcNAc...) asparagine glycosylation is found at asparagine 282, asparagine 410, and asparagine 475. The active-site Proton acceptor is the histidine 547. Histidine 547 serves as the catalytic Proton donor. FAD is bound at residue alanine 581. The active-site Proton acceptor is histidine 591. 592 to 593 (PI) provides a ligand contact to FAD.

It belongs to the GMC oxidoreductase family. The cofactor is FAD.

It participates in phytotoxin biosynthesis. Oxidoreductase; part of the gene cluster that mediates the biosynthesis of cichorine, a phytotoxin active against knapweed, corn, and soybeans. The first step in the pathway is performed by the non-reducing polyketide synthase pkbA that condenses one acetyl-CoA starter unit with 3 malonyl-CoA units. PkbA also catalyzes one methylation step to produce 3-methylorsellinate. The nonribosomal peptide synthase-like protein cicB, the cytochrome P450 monooxygenase cicH and the O-methyltransferase cicE are involved in the conversion of 3-methylorsellinate into nidulol. CicB converts 3-methylorsellinate to a yet unidentified intermediate, cicH may play a ring-closing role for cichorine and cicE is plausibly responsible for the methylation of one of the phenol groups. The oxidoreductase cicC acts downstream with still unidentified enzymes to further convert nidulol into cichorine. This chain is Oxidoreductase cicC, found in Emericella nidulans (strain FGSC A4 / ATCC 38163 / CBS 112.46 / NRRL 194 / M139) (Aspergillus nidulans).